We begin with the raw amino-acid sequence, 302 residues long: Sulfate adenylyltransferase subunit 2 (302 aa).

The tract at residues 280-302 is disordered; sequence RQGRLIDSDQSASMEQKKRQGYF.

This sequence belongs to the PAPS reductase family. CysD subfamily. In terms of assembly, heterodimer composed of CysD, the smaller subunit, and CysN.

It carries out the reaction sulfate + ATP + H(+) = adenosine 5'-phosphosulfate + diphosphate. Its pathway is sulfur metabolism; hydrogen sulfide biosynthesis; sulfite from sulfate: step 1/3. Functionally, with CysN forms the ATP sulfurylase (ATPS) that catalyzes the adenylation of sulfate producing adenosine 5'-phosphosulfate (APS) and diphosphate, the first enzymatic step in sulfur assimilation pathway. APS synthesis involves the formation of a high-energy phosphoric-sulfuric acid anhydride bond driven by GTP hydrolysis by CysN coupled to ATP hydrolysis by CysD. The sequence is that of Sulfate adenylyltransferase subunit 2 from Shewanella oneidensis (strain ATCC 700550 / JCM 31522 / CIP 106686 / LMG 19005 / NCIMB 14063 / MR-1).